The following is a 264-amino-acid chain: Thymidylate synthase (264 aa).

Arginine 21 is a binding site for dUMP. Position 51 (histidine 51) interacts with (6R)-5,10-methylene-5,6,7,8-tetrahydrofolate. 126–127 (RR) is a dUMP binding site. Cysteine 146 (nucleophile) is an active-site residue. Residues 166 to 169 (RSAD), asparagine 177, and 207 to 209 (HLY) contribute to the dUMP site. Aspartate 169 is a binding site for (6R)-5,10-methylene-5,6,7,8-tetrahydrofolate. A (6R)-5,10-methylene-5,6,7,8-tetrahydrofolate-binding site is contributed by alanine 263.

This sequence belongs to the thymidylate synthase family. Bacterial-type ThyA subfamily. Homodimer.

The protein localises to the cytoplasm. It carries out the reaction dUMP + (6R)-5,10-methylene-5,6,7,8-tetrahydrofolate = 7,8-dihydrofolate + dTMP. It participates in pyrimidine metabolism; dTTP biosynthesis. In terms of biological role, catalyzes the reductive methylation of 2'-deoxyuridine-5'-monophosphate (dUMP) to 2'-deoxythymidine-5'-monophosphate (dTMP) while utilizing 5,10-methylenetetrahydrofolate (mTHF) as the methyl donor and reductant in the reaction, yielding dihydrofolate (DHF) as a by-product. This enzymatic reaction provides an intracellular de novo source of dTMP, an essential precursor for DNA biosynthesis. The polypeptide is Thymidylate synthase (Bartonella bacilliformis (strain ATCC 35685 / KC583 / Herrer 020/F12,63)).